We begin with the raw amino-acid sequence, 93 residues long: Acylphosphatase (93 aa).

An Acylphosphatase-like domain is found at 4 to 91; that stretch reads TLHLVIHGRV…PAGTGFRVAA (88 aa). Residues Arg-19 and Asn-37 contribute to the active site.

The protein belongs to the acylphosphatase family.

It carries out the reaction an acyl phosphate + H2O = a carboxylate + phosphate + H(+). This chain is Acylphosphatase (acyP), found in Azorhizobium caulinodans (strain ATCC 43989 / DSM 5975 / JCM 20966 / LMG 6465 / NBRC 14845 / NCIMB 13405 / ORS 571).